A 359-amino-acid polypeptide reads, in one-letter code: Bergaptol O-methyltransferase (359 aa).

H126 is a bergaptol binding site. S179, G203, D226, D246, and K260 together coordinate S-adenosyl-L-homocysteine. Position 264 (H264) interacts with bergaptol. Residue H264 is the Proton acceptor of the active site.

Belongs to the class I-like SAM-binding methyltransferase superfamily. Cation-independent O-methyltransferase family. COMT subfamily. As to quaternary structure, homodimer. As to expression, mostly expressed in roots and, to a lower extent, in stems and leaves.

The protein resides in the cytoplasm. It carries out the reaction bergaptol + S-adenosyl-L-methionine = bergapten + S-adenosyl-L-homocysteine. Its pathway is aromatic compound metabolism. It functions in the pathway secondary metabolite biosynthesis. O-methyltransferase involved in the biosynthesis of furocoumarins natural products such as bergapten, a photosensitizer used for medical purpose such as treating psoriasis and vitiligo or facilitating resistance to microbial infection and other stresses. Catalyzes specifically the methylation of bergaptol. Not active on xanthotol, isoscopoletin, scopoletin and esculetin. This is Bergaptol O-methyltransferase from Kitagawia praeruptora (Peucedanum praeruptorum).